A 294-amino-acid chain; its full sequence is MEQYEKEEKIGEGTYGVVYRARDKVTNETIALKKIRLEQEDEGVPSTAIREISLLKEMHHGNIVRLHDVIHSEKRIYLVFEYLDLDLKKFMDSCPEFAKNPTLIKSYLYQILRGVAYCHSHRVLHRDLKPQNLLIDRRTNALKLADFGLARAFGIPVRTFTHEVVTLWYRAPEILLGSRQYSTPVDMWSVGCIFAEMVNQKPLFPGDSEIDELFKIFRVLGTPNEQSWPGVSSLPDYKSAFPKWQAQDLATIVPTLDPAGLDLLSKMLRYEPNKRITARQALEHEYFKDLEMVQ.

A Protein kinase domain is found at 4–287 (YEKEEKIGEG…ARQALEHEYF (284 aa)). ATP is bound by residues 10 to 18 (IGEGTYGVV) and K33. Residue T14 is modified to Phosphothreonine. Y15 carries the post-translational modification Phosphotyrosine. D127 acts as the Proton acceptor in catalysis. At T161 the chain carries Phosphothreonine; by CAK.

This sequence belongs to the protein kinase superfamily. CMGC Ser/Thr protein kinase family. CDC2/CDKX subfamily. In terms of processing, phosphorylated at Thr-161 by CDKD-1. In terms of tissue distribution, expressed in the dividing region of the root apex and in differentiated cells such as those in the sclerenchyma, pericycle and parenchyma of the central cylinder.

The enzyme catalyses L-seryl-[protein] + ATP = O-phospho-L-seryl-[protein] + ADP + H(+). It catalyses the reaction L-threonyl-[protein] + ATP = O-phospho-L-threonyl-[protein] + ADP + H(+). It carries out the reaction [DNA-directed RNA polymerase] + ATP = phospho-[DNA-directed RNA polymerase] + ADP + H(+). This chain is Cyclin-dependent kinase A-1 (CDKA-1), found in Oryza sativa subsp. japonica (Rice).